A 96-amino-acid polypeptide reads, in one-letter code: Probable RNA-binding protein YqeI (96 aa).

One can recognise a CRM domain in the interval 1 to 96 (MLTGKQKRFL…SKENKQIELP (96 aa)).

The protein is Probable RNA-binding protein YqeI (yqeI) of Bacillus subtilis (strain 168).